The sequence spans 342 residues: NLP effector protein Pc107869 (342 aa).

Residues 1–19 (MKTGFFLFAACAALVAVQA) form the signal peptide. Residue asparagine 24 is glycosylated (N-linked (GlcNAc...) asparagine). The tract at residues 41-125 (APRTKAPPTK…PTPDPGPWEA (85 aa)) is disordered. The span at 55-75 (QQSSLSGSQEQQQEQIETPAP) shows a compositional bias: low complexity. Residues 93-121 (TPAPTPAPTPAPTPAPTPAPTPAPTPDPG) show a composition bias toward pro residues. A Hepta-peptide GHRHDWE motif motif is present at residues 226–232 (GHRHDWE).

It belongs to the Necrosis inducing protein (NPP1) family.

It is found in the secreted. In terms of biological role, secreted effector that contributes strongly to virulence during infection by P.capsici. Induces cell death in the Solanaceae, including Nicotiana benthamiana. The sequence is that of NLP effector protein Pc107869 from Phytophthora capsici.